A 538-amino-acid polypeptide reads, in one-letter code: Cytochrome P450 monooxygenase claM (538 aa).

Residues 36 to 56 (LSIGLVVLIGAISSFLLQQFL) form a helical membrane-spanning segment. Asn306 and Asn425 each carry an N-linked (GlcNAc...) asparagine glycan. Heme is bound at residue Cys472.

This sequence belongs to the cytochrome P450 family. The cofactor is heme.

It is found in the membrane. It carries out the reaction 2 nataloe emodin + reduced [NADPH--hemoprotein reductase] + O2 = cladofulvin + oxidized [NADPH--hemoprotein reductase] + 2 H2O + H(+). It participates in pigment biosynthesis. Cytochrome P450 monooxygenase; part of the gene cluster that mediates the biosynthesis of the bianthraquinone cladofulvin, a conidial pigment not required for virulence but that plays a role in fitness and resistance to environmental stresses including UV light and low-temperature stress. The pathway begins with the synthesis of atrochrysone thioester by the polyketide synthase (PKS) claG. The atrochrysone carboxyl ACP thioesterase claF then breaks the thioester bond and releases the atrochrysone carboxylic acid from claG. This compound is decarboxylated by claH to yield emodin, which is further converted to chrysophanol hydroquinone by the reductase claC and the dehydratase claB. The cytochrome monooxygenase P450 claM then catalyzes the dimerization of nataloe-emodin to cladofulvin. The chain is Cytochrome P450 monooxygenase claM from Passalora fulva (Tomato leaf mold).